We begin with the raw amino-acid sequence, 222 residues long: 7-cyano-7-deazaguanine synthase (222 aa).

ATP is bound at residue 7-17; that stretch reads LSGGLDSSTVL. Zn(2+) contacts are provided by C191, C199, C202, and C205.

The protein belongs to the QueC family. Zn(2+) is required as a cofactor.

It carries out the reaction 7-carboxy-7-deazaguanine + NH4(+) + ATP = 7-cyano-7-deazaguanine + ADP + phosphate + H2O + H(+). It functions in the pathway purine metabolism; 7-cyano-7-deazaguanine biosynthesis. Functionally, catalyzes the ATP-dependent conversion of 7-carboxy-7-deazaguanine (CDG) to 7-cyano-7-deazaguanine (preQ(0)). This is 7-cyano-7-deazaguanine synthase from Trichodesmium erythraeum (strain IMS101).